A 739-amino-acid chain; its full sequence is Vascular cell adhesion protein 1 (739 aa).

A signal peptide spans 1-24 (MPRKMVVIFGASNILWMVFAVSQA). Ig-like C2-type domains lie at 25-105 (SKME…KKLE), 109-212 (QVEI…KERE), 223-309 (PRNT…LIVQ), 312-399 (PFTV…IKVD), 408-506 (EVEM…QTLY), 511-595 (PRDT…VELI), and 600-684 (PKDI…LTLD). Topologically, residues 25 to 698 (SKMEIFLEPR…ENNKDYFSPE (674 aa)) are extracellular. 5 disulfides stabilise this stretch: C47/C95, C52/C99, C137/C195, C246/C291, and C335/C383. 2 N-linked (GlcNAc...) asparagine glycosylation sites follow: N76 and N77. N273 carries an N-linked (GlcNAc...) asparagine glycan. A glycan (N-linked (GlcNAc...) asparagine) is linked at N531. Cysteines 534 and 579 form a disulfide. A helical membrane pass occupies residues 699–720 (LLVLYCASSLIIPAIGMIIYFA). Topologically, residues 721–739 (RRANMKGSYSLVEAQKSKV) are cytoplasmic.

Post-translationally, cleaved by the metalloproteinase ADAM17 to generate the soluble form. In terms of processing, sialoglycoprotein. Ubiquitinated by TRIM65 via 'Lys-48'-linked ubiquitination; leading to proteasomal degradation.

The protein resides in the cell membrane. It is found in the secreted. In terms of biological role, cell adhesion glycoprotein predominantly expressed on the surface of endothelial cells that plays an important role in immune surveillance and inflammation. Acts as a major regulator of leukocyte adhesion to the endothelium through interaction with different types of integrins. During inflammatory responses, binds ligands on the surface of activated endothelial cells to initiate the activation of calcium channels and the plasma membrane-associated small GTPase RAC1 leading to leukocyte transendothelial migration. Also serves as a quality-control checkpoint for entry into bone marrow by providing a 'don't-eat-me' stamping in the context of major histocompatibility complex (MHC) class-I presentation. This is Vascular cell adhesion protein 1 (VCAM1) from Canis lupus familiaris (Dog).